We begin with the raw amino-acid sequence, 214 residues long: Cutinase CUT2 (214 aa).

Positions 1–18 (MQFSLSIATAILAATASA) are cleaved as a signal peptide. The cysteines at positions 40 and 117 are disulfide-linked. Residue Ser-128 is the Nucleophile of the active site. Cys-179 and Cys-186 are disulfide-bonded. Residue Asp-183 is part of the active site. The Proton donor/acceptor role is filled by His-196.

Belongs to the cutinase family. The 2 disulfide bonds play a critical role in holding the catalytic residues in juxta-position; reduction of the disulfide bridges results in the complete inactivation of the enzyme.

The protein localises to the secreted. It carries out the reaction cutin + H2O = cutin monomers.. In terms of biological role, catalyzes the hydrolysis of complex carboxylic polyesters found in the cell wall of plants. Degrades cutin, a macromolecule that forms the structure of the plant cuticle. Required for efficient penetration of the host plant cuticle by the appressorium during the initial stage of fungal infection. The sequence is that of Cutinase CUT2 from Pyricularia oryzae (strain 70-15 / ATCC MYA-4617 / FGSC 8958) (Rice blast fungus).